The following is a 273-amino-acid chain: Proteasome subunit beta (273 aa).

The span at 1-19 shows a compositional bias: polar residues; it reads MQESTANKVAANATSSFTE. Residues 1-23 are disordered; sequence MQESTANKVAANATSSFTEHLQR. Positions 1–50 are cleaved as a propeptide — removed in mature form; by autocatalysis; the sequence is MQESTANKVAANATSSFTEHLQRDRPELLPFNRSGQGSATAAAPLQVPHA. Residue T51 is the Nucleophile of the active site.

It belongs to the peptidase T1B family. The 20S proteasome core is composed of 14 alpha and 14 beta subunits that assemble into four stacked heptameric rings, resulting in a barrel-shaped structure. The two inner rings, each composed of seven catalytic beta subunits, are sandwiched by two outer rings, each composed of seven alpha subunits. The catalytic chamber with the active sites is on the inside of the barrel. Has a gated structure, the ends of the cylinder being occluded by the N-termini of the alpha-subunits. Is capped by the proteasome-associated ATPase, ARC.

It is found in the cytoplasm. The enzyme catalyses Cleavage of peptide bonds with very broad specificity.. The protein operates within protein degradation; proteasomal Pup-dependent pathway. With respect to regulation, the formation of the proteasomal ATPase ARC-20S proteasome complex, likely via the docking of the C-termini of ARC into the intersubunit pockets in the alpha-rings, may trigger opening of the gate for substrate entry. Interconversion between the open-gate and close-gate conformations leads to a dynamic regulation of the 20S proteasome proteolysis activity. In terms of biological role, component of the proteasome core, a large protease complex with broad specificity involved in protein degradation. The protein is Proteasome subunit beta of Pseudarthrobacter chlorophenolicus (strain ATCC 700700 / DSM 12829 / CIP 107037 / JCM 12360 / KCTC 9906 / NCIMB 13794 / A6) (Arthrobacter chlorophenolicus).